A 100-amino-acid chain; its full sequence is uncharacterized protein (100 aa).

Its subcellular location is the mitochondrion. This is an uncharacterized protein from Arabidopsis thaliana (Mouse-ear cress).